Consider the following 247-residue polypeptide: Phosphate import ATP-binding protein PstB (247 aa).

Positions 2–242 (CRDVNVYYGE…PRHPLTEDYI (241 aa)) constitute an ABC transporter domain. 32–39 (GPSGCGKS) serves as a coordination point for ATP.

The protein belongs to the ABC transporter superfamily. Phosphate importer (TC 3.A.1.7) family. In terms of assembly, the complex is composed of two ATP-binding proteins (PstB), two transmembrane proteins (PstC and PstA) and a solute-binding protein (PstS).

Its subcellular location is the cell inner membrane. The catalysed reaction is phosphate(out) + ATP + H2O = ADP + 2 phosphate(in) + H(+). Its function is as follows. Part of the ABC transporter complex PstSACB involved in phosphate import. Responsible for energy coupling to the transport system. The sequence is that of Phosphate import ATP-binding protein PstB from Methylococcus capsulatus (strain ATCC 33009 / NCIMB 11132 / Bath).